Consider the following 213-residue polypeptide: Glycerol-3-phosphate acyltransferase (213 aa).

6 helical membrane passes run 2–22, 54–74, 80–100, 110–130, 143–163, and 165–185; these read ITIV…GLWI, MATF…PIMF, SPLI…FAGF, AGVV…VFFG, VTAS…GFIL, and NYDP…IIRH.

Belongs to the PlsY family. As to quaternary structure, probably interacts with PlsX.

It localises to the cell membrane. It catalyses the reaction an acyl phosphate + sn-glycerol 3-phosphate = a 1-acyl-sn-glycero-3-phosphate + phosphate. Its pathway is lipid metabolism; phospholipid metabolism. In terms of biological role, catalyzes the transfer of an acyl group from acyl-phosphate (acyl-PO(4)) to glycerol-3-phosphate (G3P) to form lysophosphatidic acid (LPA). This enzyme utilizes acyl-phosphate as fatty acyl donor, but not acyl-CoA or acyl-ACP. This is Glycerol-3-phosphate acyltransferase from Streptococcus pneumoniae (strain Taiwan19F-14).